The primary structure comprises 170 residues: Adenine phosphoribosyltransferase (170 aa).

This sequence belongs to the purine/pyrimidine phosphoribosyltransferase family. In terms of assembly, homodimer.

It is found in the cytoplasm. It catalyses the reaction AMP + diphosphate = 5-phospho-alpha-D-ribose 1-diphosphate + adenine. It functions in the pathway purine metabolism; AMP biosynthesis via salvage pathway; AMP from adenine: step 1/1. In terms of biological role, catalyzes a salvage reaction resulting in the formation of AMP, that is energically less costly than de novo synthesis. The chain is Adenine phosphoribosyltransferase from Lysinibacillus sphaericus (strain C3-41).